The primary structure comprises 258 residues: UPF0246 protein Pnuc_0753 (258 aa).

The protein belongs to the UPF0246 family.

This Polynucleobacter asymbioticus (strain DSM 18221 / CIP 109841 / QLW-P1DMWA-1) (Polynucleobacter necessarius subsp. asymbioticus) protein is UPF0246 protein Pnuc_0753.